A 492-amino-acid chain; its full sequence is N-succinylglutamate 5-semialdehyde dehydrogenase (492 aa).

220-225 (GSANTG) is an NAD(+) binding site. Residues Glu-243 and Cys-277 contribute to the active site.

It belongs to the aldehyde dehydrogenase family. AstD subfamily.

It catalyses the reaction N-succinyl-L-glutamate 5-semialdehyde + NAD(+) + H2O = N-succinyl-L-glutamate + NADH + 2 H(+). The protein operates within amino-acid degradation; L-arginine degradation via AST pathway; L-glutamate and succinate from L-arginine: step 4/5. Its function is as follows. Catalyzes the NAD-dependent reduction of succinylglutamate semialdehyde into succinylglutamate. The sequence is that of N-succinylglutamate 5-semialdehyde dehydrogenase from Escherichia coli O17:K52:H18 (strain UMN026 / ExPEC).